Reading from the N-terminus, the 289-residue chain is MELLCHEVDPVRRAVRDRNLLRDDRVLQNLLTIEERYLPQCSYFKCVQKDIQPYMRRMVATWMLEVCEEQKCEEEVFPLAMNYLDRFLAGVPTPKSHLQLLGAVCMFLASKLKETSPLTAEKLCIYTDNSIKPQELLEWELVVLGKLKWNLAAVTPHDFIEHILRKLPQQREKLSLIRKHAQTFIALCATDFKFAMYPPSMIATGSVGAAICGLQQDEEVSSLTCDALTELLAKITNTDVDCLKACQEQIEAVLLNSLQQYRQDQRDGSKSEDELDQASTPTDVRDIDL.

Residues Val26–Leu151 form the Cyclin N-terminal domain. Residues Asp264–Leu289 are disordered. Ser271 carries the post-translational modification Phosphoserine. Phosphothreonine is present on Thr280.

Belongs to the cyclin family. Cyclin D subfamily. Interacts with either CDK4 or CDK6 protein kinase to form a serine/threonine kinase holoenzyme complex. The cyclin subunit imparts substrate specificity to the complex. Post-translationally, phosphorylation at Thr-280 by MAP kinases is required for ubiquitination and degradation by the DCX(AMBRA1) complex. In terms of processing, ubiquitinated by the DCX(AMBRA1) complex during the transition from G1 to S cell phase, leading to its degradation: ubiquitination is dependent on Thr-280 phosphorylation. The DCX(AMBRA1) complex represents the major regulator of CCND2 stability during the G1/S transition. Polyubiquitinated by the SCF(FBXL2) complex, leading to proteasomal degradation.

Its subcellular location is the nucleus. It localises to the cytoplasm. The protein localises to the nucleus membrane. Functionally, regulatory component of the cyclin D2-CDK4 (DC) complex that phosphorylates and inhibits members of the retinoblastoma (RB) protein family including RB1 and regulates the cell-cycle during G(1)/S transition. Phosphorylation of RB1 allows dissociation of the transcription factor E2F from the RB/E2F complex and the subsequent transcription of E2F target genes which are responsible for the progression through the G(1) phase. Hypophosphorylates RB1 in early G(1) phase. Cyclin D-CDK4 complexes are major integrators of various mitogenenic and antimitogenic signals. The polypeptide is G1/S-specific cyclin-D2 (Homo sapiens (Human)).